A 283-amino-acid chain; its full sequence is Pantothenate synthetase (283 aa).

ATP is bound at residue 30 to 37 (MGNLHDGH). His37 (proton donor) is an active-site residue. Gln61 is a binding site for (R)-pantoate. Gln61 contacts beta-alanine. ATP is bound at residue 149 to 152 (GEKD). Residue Gln155 participates in (R)-pantoate binding. ATP is bound at residue 186-189 (LSSR).

It belongs to the pantothenate synthetase family. As to quaternary structure, homodimer.

It is found in the cytoplasm. The catalysed reaction is (R)-pantoate + beta-alanine + ATP = (R)-pantothenate + AMP + diphosphate + H(+). It functions in the pathway cofactor biosynthesis; (R)-pantothenate biosynthesis; (R)-pantothenate from (R)-pantoate and beta-alanine: step 1/1. In terms of biological role, catalyzes the condensation of pantoate with beta-alanine in an ATP-dependent reaction via a pantoyl-adenylate intermediate. This chain is Pantothenate synthetase, found in Shigella sonnei (strain Ss046).